The following is a 213-amino-acid chain: Uridine kinase (213 aa).

13-20 lines the ATP pocket; it reads GGSCSGKT.

Belongs to the uridine kinase family.

The protein resides in the cytoplasm. The enzyme catalyses uridine + ATP = UMP + ADP + H(+). The catalysed reaction is cytidine + ATP = CMP + ADP + H(+). It participates in pyrimidine metabolism; CTP biosynthesis via salvage pathway; CTP from cytidine: step 1/3. Its pathway is pyrimidine metabolism; UMP biosynthesis via salvage pathway; UMP from uridine: step 1/1. This chain is Uridine kinase (udk), found in Mycoplasma pneumoniae (strain ATCC 29342 / M129 / Subtype 1) (Mycoplasmoides pneumoniae).